A 269-amino-acid polypeptide reads, in one-letter code: tRNA pseudouridine synthase A (269 aa).

Aspartate 51 serves as the catalytic Nucleophile. Tyrosine 109 contributes to the substrate binding site.

Belongs to the tRNA pseudouridine synthase TruA family. Homodimer.

It catalyses the reaction uridine(38/39/40) in tRNA = pseudouridine(38/39/40) in tRNA. In terms of biological role, formation of pseudouridine at positions 38, 39 and 40 in the anticodon stem and loop of transfer RNAs. The chain is tRNA pseudouridine synthase A from Aeromonas salmonicida (strain A449).